Reading from the N-terminus, the 573-residue chain is Glucocorticoid modulatory element-binding protein 1 (573 aa).

N-acetylalanine is present on Ala2. Positions Thr82–Asp166 constitute an SAND domain. Residue Cys113 coordinates Zn(2+). Residues Lys139, Lys143, Lys146, and Arg157 each contribute to the DNA site. Positions 170, 174, and 178 each coordinate Zn(2+). Residues Leu321–Val367 are a coiled coil. The disordered stretch occupies residues Pro370–Gln398.

In terms of assembly, homodimer, and heterodimer of GMEB1 and GMEB2. GMEB1 and GMEB2 form the parvovirus initiator complex (PIF). Interacts with the glucocorticoid receptor (NR3C1) and NCOA2/TIF2. May interact with HSP27 and CREB-binding protein (CBP).

The protein localises to the nucleus. It is found in the cytoplasm. In terms of biological role, trans-acting factor that binds to glucocorticoid modulatory elements (GME) present in the TAT (tyrosine aminotransferase) promoter and increases sensitivity to low concentrations of glucocorticoids. Also binds to the transferrin receptor promoter. Essential auxiliary factor for the replication of parvoviruses. This Homo sapiens (Human) protein is Glucocorticoid modulatory element-binding protein 1 (GMEB1).